A 423-amino-acid chain; its full sequence is Phosphoribosylamine--glycine ligase (423 aa).

The ATP-grasp domain occupies 107–312; the sequence is KDLCARYGIP…LLPLLYAAAT (206 aa). 133–193 serves as a coordination point for ATP; sequence IREEGAPIVI…EAYLDGEEAS (61 aa). Mg(2+) contacts are provided by glutamate 282 and asparagine 284.

Belongs to the GARS family. The cofactor is Mg(2+). It depends on Mn(2+) as a cofactor.

The catalysed reaction is 5-phospho-beta-D-ribosylamine + glycine + ATP = N(1)-(5-phospho-beta-D-ribosyl)glycinamide + ADP + phosphate + H(+). Its pathway is purine metabolism; IMP biosynthesis via de novo pathway; N(1)-(5-phospho-D-ribosyl)glycinamide from 5-phospho-alpha-D-ribose 1-diphosphate: step 2/2. The chain is Phosphoribosylamine--glycine ligase from Rhizobium meliloti (strain 1021) (Ensifer meliloti).